The sequence spans 478 residues: Phenylalanine--tRNA ligase alpha subunit (478 aa).

Residues Thr318, 357–359 (QLE), and Tyr397 contribute to the L-phenylalanine site. Mg(2+) is bound at residue Glu399. Phe422 is a binding site for L-phenylalanine.

It belongs to the class-II aminoacyl-tRNA synthetase family. Phe-tRNA synthetase alpha subunit type 2 subfamily. As to quaternary structure, tetramer of two alpha and two beta subunits. Mg(2+) serves as cofactor.

Its subcellular location is the cytoplasm. The enzyme catalyses tRNA(Phe) + L-phenylalanine + ATP = L-phenylalanyl-tRNA(Phe) + AMP + diphosphate + H(+). This Methanospirillum hungatei JF-1 (strain ATCC 27890 / DSM 864 / NBRC 100397 / JF-1) protein is Phenylalanine--tRNA ligase alpha subunit.